Consider the following 416-residue polypeptide: Squalene synthase (416 aa).

2 residues coordinate NADP(+): arginine 52 and arginine 77. Positions 80, 83, and 84 each coordinate Mg(2+). Arginine 218 lines the NADP(+) pocket. The chain crosses the membrane as a helical span at residues 284-304; the sequence is SVFNFCAIPQVMAIATLAACY. NADP(+)-binding residues include lysine 315 and arginine 317. A helical transmembrane segment spans residues 384–404; it reads PIYLSFIMLLAALSWQYLSTL.

This sequence belongs to the phytoene/squalene synthase family. The cofactor is Mg(2+).

It is found in the endoplasmic reticulum membrane. The enzyme catalyses 2 (2E,6E)-farnesyl diphosphate + NADPH + H(+) = squalene + 2 diphosphate + NADP(+). The catalysed reaction is 2 (2E,6E)-farnesyl diphosphate + NADH + H(+) = squalene + 2 diphosphate + NAD(+). It carries out the reaction presqualene diphosphate + NADH + H(+) = squalene + diphosphate + NAD(+). It catalyses the reaction presqualene diphosphate + NADPH + H(+) = squalene + diphosphate + NADP(+). The enzyme catalyses 2 (2E,6E)-farnesyl diphosphate = presqualene diphosphate + diphosphate. Its pathway is terpene metabolism; lanosterol biosynthesis; lanosterol from farnesyl diphosphate: step 1/3. In terms of biological role, catalyzes the condensation of 2 farnesyl pyrophosphate (FPP) moieties to form squalene. Proceeds in two distinct steps. In the first half-reaction, two molecules of FPP react to form the stable presqualene diphosphate intermediate (PSQPP), with concomitant release of a proton and a molecule of inorganic diphosphate. In the second half-reaction, PSQPP undergoes heterolysis, isomerization, and reduction with NADPH or NADH to form squalene. It is the first committed enzyme of the sterol biosynthesis pathway. In Mus musculus (Mouse), this protein is Squalene synthase (Fdft1).